Here is a 114-residue protein sequence, read N- to C-terminus: Translation initiation factor 1A (114 aa).

In terms of domain architecture, S1-like spans 19-91; sequence SEFRLPGEGE…EKGDIVHKYE (73 aa).

The protein belongs to the eIF-1A family.

Seems to be required for maximal rate of protein biosynthesis. Enhances ribosome dissociation into subunits and stabilizes the binding of the initiator Met-tRNA(I) to 40 S ribosomal subunits. This Pyrobaculum aerophilum (strain ATCC 51768 / DSM 7523 / JCM 9630 / CIP 104966 / NBRC 100827 / IM2) protein is Translation initiation factor 1A (eIF1A).